The chain runs to 1029 residues: Translation initiation factor IF-2 (1029 aa).

A disordered region spans residues 73-441 (RELRSEEDDG…RQRRRERKRE (369 aa)). Composition is skewed to acidic residues over residues 106 to 121 (TAEE…DEEE) and 148 to 177 (AEAE…DEAE). Positions 183–196 (AADKDAAAIADEQK) are enriched in basic and acidic residues. Acidic residues-rich tracts occupy residues 213 to 234 (TGEE…DAEA), 242 to 258 (TEAE…AEDV), and 279 to 322 (APDE…DEEG). Positions 358-372 (KDKDKDKSSKKDKKD) are enriched in basic and acidic residues. The span at 373–386 (KSNKKSKSKGKKQK) shows a compositional bias: basic residues. Low complexity predominate over residues 400–411 (QTLQETLQELEQ). Basic residues predominate over residues 417-427 (RQRRRRRRRKR). The span at 428–441 (HEEERQRRRERKRE) shows a compositional bias: basic and acidic residues. Positions 524-696 (PRAPVVTVMG…LLQSEIMELK (173 aa)) constitute a tr-type G domain. The G1 stretch occupies residues 533 to 540 (GHVDHGKT). Residue 533–540 (GHVDHGKT) participates in GTP binding. The interval 558–562 (GITQH) is G2. The interval 582–585 (DTPG) is G3. GTP-binding positions include 582 to 586 (DTPGH) and 636 to 639 (NKMD). The tract at residues 636–639 (NKMD) is G4. The G5 stretch occupies residues 672–674 (SAK).

This sequence belongs to the TRAFAC class translation factor GTPase superfamily. Classic translation factor GTPase family. IF-2 subfamily.

It is found in the cytoplasm. Its function is as follows. One of the essential components for the initiation of protein synthesis. Protects formylmethionyl-tRNA from spontaneous hydrolysis and promotes its binding to the 30S ribosomal subunits. Also involved in the hydrolysis of GTP during the formation of the 70S ribosomal complex. The polypeptide is Translation initiation factor IF-2 (Salinibacter ruber (strain DSM 13855 / M31)).